A 60-amino-acid chain; its full sequence is Large ribosomal subunit protein bL32A (60 aa).

Positions Met-1–Gln-19 are enriched in basic residues. A disordered region spans residues Met-1–Lys-21.

The protein belongs to the bacterial ribosomal protein bL32 family.

The chain is Large ribosomal subunit protein bL32A from Nocardia farcinica (strain IFM 10152).